The chain runs to 516 residues: Histidine ammonia-lyase 1 (516 aa).

A cross-link (5-imidazolinone (Ser-Gly)) is located at residues 147–149 (SSG). Serine 148 carries the post-translational modification 2,3-didehydroalanine (Ser).

Belongs to the PAL/histidase family. Post-translationally, contains an active site 4-methylidene-imidazol-5-one (MIO), which is formed autocatalytically by cyclization and dehydration of residues Ser-Ser-Gly.

Its subcellular location is the cytoplasm. The enzyme catalyses L-histidine = trans-urocanate + NH4(+). Its pathway is amino-acid degradation; L-histidine degradation into L-glutamate; N-formimidoyl-L-glutamate from L-histidine: step 1/3. This chain is Histidine ammonia-lyase 1 (hutH1), found in Fusobacterium nucleatum subsp. nucleatum (strain ATCC 25586 / DSM 15643 / BCRC 10681 / CIP 101130 / JCM 8532 / KCTC 2640 / LMG 13131 / VPI 4355).